The chain runs to 110 residues: Ig lambda-1 chain V region S178 (110 aa).

In terms of domain architecture, Ig-like spans 1 to 106 (QAVVTQESAL…RWVFGGGTKL (106 aa)).

This is Ig lambda-1 chain V region S178 from Mus musculus (Mouse).